Here is a 198-residue protein sequence, read N- to C-terminus: Putative protein-methionine-sulfoxide reductase subunit YedZ1 (198 aa).

4 helical membrane-spanning segments follow: residues 12-32 (WLRV…MSGW), 63-83 (FAAM…NIFS), 124-144 (AAYL…LVLW), and 167-187 (FIGM…VALV).

It belongs to the HupC/HyaC/HydC family.

Its subcellular location is the cell inner membrane. In terms of biological role, part of the YedY1-YedZ1 system that may repair oxidized proteins containing methionine sulfoxide residues (Met-O). The chain is Putative protein-methionine-sulfoxide reductase subunit YedZ1 from Azospira oryzae (strain ATCC BAA-33 / DSM 13638 / PS) (Dechlorosoma suillum).